The chain runs to 112 residues: Putative pterin-4-alpha-carbinolamine dehydratase (112 aa).

It belongs to the pterin-4-alpha-carbinolamine dehydratase family.

The catalysed reaction is (4aS,6R)-4a-hydroxy-L-erythro-5,6,7,8-tetrahydrobiopterin = (6R)-L-erythro-6,7-dihydrobiopterin + H2O. In Syntrophotalea carbinolica (strain DSM 2380 / NBRC 103641 / GraBd1) (Pelobacter carbinolicus), this protein is Putative pterin-4-alpha-carbinolamine dehydratase.